A 339-amino-acid chain; its full sequence is D-alanine--D-alanine ligase (339 aa).

Residues lysine 126–glutamate 333 enclose the ATP-grasp domain. Alanine 158–glutamate 213 is a binding site for ATP. Residues aspartate 286, glutamate 300, and asparagine 302 each coordinate Mg(2+).

The protein belongs to the D-alanine--D-alanine ligase family. Requires Mg(2+) as cofactor. The cofactor is Mn(2+).

Its subcellular location is the cytoplasm. It catalyses the reaction 2 D-alanine + ATP = D-alanyl-D-alanine + ADP + phosphate + H(+). It functions in the pathway cell wall biogenesis; peptidoglycan biosynthesis. Functionally, cell wall formation. The sequence is that of D-alanine--D-alanine ligase from Deinococcus radiodurans (strain ATCC 13939 / DSM 20539 / JCM 16871 / CCUG 27074 / LMG 4051 / NBRC 15346 / NCIMB 9279 / VKM B-1422 / R1).